The chain runs to 600 residues: UPF0588 membrane protein C20F10.02c (600 aa).

A run of 2 helical transmembrane segments spans residues 409–429 and 437–457; these read LSAT…TSLV and YHWL…SVLI.

This sequence belongs to the UPF0588 family.

The protein resides in the membrane. The polypeptide is UPF0588 membrane protein C20F10.02c (Schizosaccharomyces pombe (strain 972 / ATCC 24843) (Fission yeast)).